The following is a 295-amino-acid chain: GTPase Era (295 aa).

In terms of domain architecture, Era-type G spans 7-176 (KTVSVCIIGR…ITSKAKIAPW (170 aa)). Residues 15 to 22 (GRPNSGKS) form a G1 region. 15–22 (GRPNSGKS) contacts GTP. Residues 41–45 (QTTRS) are G2. The segment at 62 to 65 (DTPG) is G3. Residues 62 to 66 (DTPGI) and 124 to 127 (NKID) contribute to the GTP site. A G4 region spans residues 124–127 (NKID). Residues 152-154 (ISA) form a G5 region. The KH type-2 domain maps to 204–281 (LQQELPYKLT…HLFLFVKVQE (78 aa)).

It belongs to the TRAFAC class TrmE-Era-EngA-EngB-Septin-like GTPase superfamily. Era GTPase family. As to quaternary structure, monomer.

Its subcellular location is the cytoplasm. The protein resides in the cell inner membrane. In terms of biological role, an essential GTPase that binds both GDP and GTP, with rapid nucleotide exchange. Plays a role in 16S rRNA processing and 30S ribosomal subunit biogenesis and possibly also in cell cycle regulation and energy metabolism. This Rickettsia bellii (strain RML369-C) protein is GTPase Era.